A 459-amino-acid chain; its full sequence is Plasma alpha-L-fucosidase (459 aa).

The signal sequence occupies residues 1–23 (MRLGLLMFLPLLLLATRYRAVTA). Asn163 and Asn231 each carry an N-linked (GlcNAc...) asparagine glycan. Ser293 is modified (phosphoserine). Asn369 is a glycosylation site (N-linked (GlcNAc...) asparagine).

The protein belongs to the glycosyl hydrolase 29 family. In terms of assembly, homotetramer.

Its subcellular location is the secreted. The catalysed reaction is an alpha-L-fucoside + H2O = L-fucose + an alcohol. In terms of biological role, alpha-L-fucosidase is responsible for hydrolyzing the alpha-1,6-linked fucose joined to the reducing-end N-acetylglucosamine of the carbohydrate moieties of glycoproteins. In Rattus norvegicus (Rat), this protein is Plasma alpha-L-fucosidase (Fuca2).